We begin with the raw amino-acid sequence, 247 residues long: ATP synthase subunit a, chloroplastic (247 aa).

The next 5 helical transmembrane spans lie at 28–48 (GQVL…CLLG), 95–115 (VPFL…GALI), 134–154 (INTT…AGIS), 199–219 (LVVG…IMLL), and 220–240 (GLFT…AYIG).

It belongs to the ATPase A chain family. In terms of assembly, F-type ATPases have 2 components, CF(1) - the catalytic core - and CF(0) - the membrane proton channel. CF(1) has five subunits: alpha(3), beta(3), gamma(1), delta(1), epsilon(1). CF(0) has four main subunits: a, b, b' and c.

The protein localises to the plastid. It localises to the chloroplast thylakoid membrane. In terms of biological role, key component of the proton channel; it plays a direct role in the translocation of protons across the membrane. In Chlorella vulgaris (Green alga), this protein is ATP synthase subunit a, chloroplastic.